Here is a 545-residue protein sequence, read N- to C-terminus: Chaperonin GroEL 2 (545 aa).

ATP is bound by residues Thr-29 to Pro-32, Asp-86 to Thr-90, Gly-414, and Asp-499.

This sequence belongs to the chaperonin (HSP60) family. As to quaternary structure, forms a cylinder of 14 subunits composed of two heptameric rings stacked back-to-back. Interacts with the co-chaperonin GroES.

Its subcellular location is the cytoplasm. It carries out the reaction ATP + H2O + a folded polypeptide = ADP + phosphate + an unfolded polypeptide.. Functionally, together with its co-chaperonin GroES, plays an essential role in assisting protein folding. The GroEL-GroES system forms a nano-cage that allows encapsulation of the non-native substrate proteins and provides a physical environment optimized to promote and accelerate protein folding. The protein is Chaperonin GroEL 2 of Chloroflexus aurantiacus (strain ATCC 29366 / DSM 635 / J-10-fl).